Reading from the N-terminus, the 543-residue chain is Chaperonin GroEL (543 aa).

ATP-binding positions include 29-32 (TLGP), 86-90 (DGTTT), Gly-413, 476-478 (NAA), and Asp-492.

The protein belongs to the chaperonin (HSP60) family. In terms of assembly, forms a cylinder of 14 subunits composed of two heptameric rings stacked back-to-back. Interacts with the co-chaperonin GroES.

The protein localises to the cytoplasm. It carries out the reaction ATP + H2O + a folded polypeptide = ADP + phosphate + an unfolded polypeptide.. Functionally, together with its co-chaperonin GroES, plays an essential role in assisting protein folding. The GroEL-GroES system forms a nano-cage that allows encapsulation of the non-native substrate proteins and provides a physical environment optimized to promote and accelerate protein folding. The protein is Chaperonin GroEL of Streptococcus pyogenes serotype M5 (strain Manfredo).